An 835-amino-acid polypeptide reads, in one-letter code: MKKLPYIAIRNQLIAPYSTATVKIGRPNSLAAIQFAQTGFNGEIYIFYTKDNKMVDSIKKTSDLEEYGVKAKIKEIVEQGKLQNVVFEVEELVKVKEIYKELGKYSFTSDIFASVTEVEYSGNFDILSDYRSKAKMLIEKLSNLHDEIGSYIYGGRRGIKELEKAFSANTNISPLTHDSFNVDIWKIIDALTIEHSWKEYFAIINETNLEKNYELAINMLINAIKMGKLDEEVNSTMRGDLENQQRDFLLRERLRQIKKLLKDDEAGAKAIENMEDAEENARQYPDYVIEALKTEQNRLASMMPASPEANISKTYIDLITTLPWKKVSGELLDIDNVRKILDKHHYGLEKPKERILEFISVLTYTKKENEKNEYVPVKGEENRFIDKNLFVNKTGNFLKDRVNNIPILTLIGPPGTGKTTLAKSIAEALGRQFVKISLGGVKDESEIRGHRRTYVGALPGKIISGIKKAGVSNPVILLDEIDKMSSDFRGDPLSALLEVLDPEQNTNFQDHYLDLEYDLSKVLFIATANSFDSIPAPLYDRVEFLELSTYTLIEKTRIARTHLLSKILSLNALTEKQYQITDEVLAYIIKNYTRESGVRNLQRLLDSIARKIVVRILDKKVDKEFVIDKAIVREFLGPELYNEKGDETQPKAGVVNALAYTAYGGTSMTIEVTTFPTTAKGALNLTGQLKDVMRESATISLAYVRSNAEKFGIKDFDFENTSIHIHVPEGAIQKDGPSAGVTFTTAIISALSKKAVPNTIAMTGEITLRGKVLPIGGLKEKSLAASQIGIKTIFIPKDNEKNLIDVPEEVKKDIKFVPVEYYDEIFKYIFEAKNK.

One can recognise a Lon N-terminal domain in the interval 4-224 (LPYIAIRNQL…LAINMLINAI (221 aa)). 412 to 419 (GPPGTGKT) serves as a coordination point for ATP. The Lon proteolytic domain maps to 649 to 832 (QPKAGVVNAL…DEIFKYIFEA (184 aa)). Active-site residues include Ser738 and Lys781.

It belongs to the peptidase S16 family. In terms of assembly, homohexamer. Organized in a ring with a central cavity.

Its subcellular location is the cytoplasm. It catalyses the reaction Hydrolysis of proteins in presence of ATP.. In terms of biological role, ATP-dependent serine protease that mediates the selective degradation of mutant and abnormal proteins as well as certain short-lived regulatory proteins. Required for cellular homeostasis and for survival from DNA damage and developmental changes induced by stress. Degrades polypeptides processively to yield small peptide fragments that are 5 to 10 amino acids long. Binds to DNA in a double-stranded, site-specific manner. The protein is Lon protease of Metamycoplasma arthritidis (strain 158L3-1) (Mycoplasma arthritidis).